Here is an 83-residue protein sequence, read N- to C-terminus: RNA-binding protein Hfq (83 aa).

The region spanning Asp9–Val68 is the Sm domain.

Belongs to the Hfq family. In terms of assembly, homohexamer.

Its function is as follows. RNA chaperone that binds small regulatory RNA (sRNAs) and mRNAs to facilitate mRNA translational regulation in response to envelope stress, environmental stress and changes in metabolite concentrations. Also binds with high specificity to tRNAs. This chain is RNA-binding protein Hfq, found in Marinobacter nauticus (strain ATCC 700491 / DSM 11845 / VT8) (Marinobacter aquaeolei).